We begin with the raw amino-acid sequence, 452 residues long: Phosphoglucosamine mutase (452 aa).

Catalysis depends on Ser101, which acts as the Phosphoserine intermediate. Mg(2+) is bound by residues Ser101, Asp241, Asp243, and Asp245. Ser101 carries the phosphoserine modification.

Belongs to the phosphohexose mutase family. Mg(2+) is required as a cofactor. Activated by phosphorylation.

It carries out the reaction alpha-D-glucosamine 1-phosphate = D-glucosamine 6-phosphate. Catalyzes the conversion of glucosamine-6-phosphate to glucosamine-1-phosphate. This chain is Phosphoglucosamine mutase, found in Lactococcus lactis subsp. cremoris (strain MG1363).